The primary structure comprises 163 residues: Ribosome maturation factor RimP (163 aa).

It belongs to the RimP family.

The protein resides in the cytoplasm. In terms of biological role, required for maturation of 30S ribosomal subunits. The chain is Ribosome maturation factor RimP from Polynucleobacter asymbioticus (strain DSM 18221 / CIP 109841 / QLW-P1DMWA-1) (Polynucleobacter necessarius subsp. asymbioticus).